The following is a 392-amino-acid chain: Protein FAM185A (392 aa).

Positions 39-60 (YSSGGSERWPGSETEVPPPGPG) are disordered.

The sequence is that of Protein FAM185A (FAM185A) from Homo sapiens (Human).